We begin with the raw amino-acid sequence, 492 residues long: N-succinylglutamate 5-semialdehyde dehydrogenase (492 aa).

220 to 225 (GSANTG) serves as a coordination point for NAD(+). Active-site residues include E243 and C277.

It belongs to the aldehyde dehydrogenase family. AstD subfamily.

It carries out the reaction N-succinyl-L-glutamate 5-semialdehyde + NAD(+) + H2O = N-succinyl-L-glutamate + NADH + 2 H(+). The protein operates within amino-acid degradation; L-arginine degradation via AST pathway; L-glutamate and succinate from L-arginine: step 4/5. In terms of biological role, catalyzes the NAD-dependent reduction of succinylglutamate semialdehyde into succinylglutamate. This is N-succinylglutamate 5-semialdehyde dehydrogenase from Shigella flexneri.